We begin with the raw amino-acid sequence, 90 residues long: C-C motif chemokine 4 homolog (90 aa).

An N-terminal signal peptide occupies residues 1–21 (MKVSVAALAVLLIAICYQTSA). 2 disulfide bridges follow: C32-C56 and C33-C72.

This sequence belongs to the intercrine beta (chemokine CC) family. As to quaternary structure, homodimer.

It localises to the secreted. Functionally, monokine with inflammatory and chemokinetic properties. This is C-C motif chemokine 4 homolog (CCL4) from Gallus gallus (Chicken).